Here is a 1013-residue protein sequence, read N- to C-terminus: Ephrin type-B receptor 6 (1013 aa).

An N-terminal signal peptide occupies residues 1-31 (MASENTAGSGSRVAGMVYSLWLLVLGPSVLA). The Extracellular segment spans residues 32-590 (LEEVLLDTTG…LPEKLSLVIG (559 aa)). The Eph LBD domain occupies 33–231 (EEVLLDTTGE…FSYTCPSVLR (199 aa)). 2 consecutive Fibronectin type-III domains span residues 363 to 478 (PPSA…TSHE) and 479 to 574 (VPSA…TLPQ). Asn-472 is a glycosylation site (N-linked (GlcNAc...) asparagine). The helical transmembrane segment at 591–611 (SILGALAFLLLAAITVLAVIF) threads the bilayer. Residues 612–1013 (QRKRRGTGYT…HLRQPGSVEV (402 aa)) are Cytoplasmic-facing. The 250-residue stretch at 662 to 911 (IKIEEVIGAG…QLVAAFDKMI (250 aa)) folds into the Protein kinase domain. 668–676 (IGAGSFGEV) contributes to the ATP binding site. The region spanning 940 to 1004 (PCLDSPQAWL…LHNIQLLQQH (65 aa)) is the SAM domain. The PDZ-binding motif lies at 1011 to 1013 (VEV).

Belongs to the protein kinase superfamily. Tyr protein kinase family. Ephrin receptor subfamily. As to quaternary structure, interacts with CBL and EPHB1. Interacts with FYN; this interaction takes place in a ligand-independent manner. Post-translationally, ligand-binding increases phosphorylation on tyrosine residues. Phosphorylation on tyrosine residues is mediated by transphosphorylation by the catalytically active EPHB1 in a ligand-independent manner. Tyrosine phosphorylation of the receptor may act as a switch on the functional transition from cell adhesion/attraction to de-adhesion/repulsion.

The protein resides in the membrane. Kinase-defective receptor for members of the ephrin-B family. Binds to ephrin-B1 and ephrin-B2. Modulates cell adhesion and migration by exerting both positive and negative effects upon stimulation with ephrin-B2. Inhibits JNK activation, T-cell receptor-induced IL-2 secretion and CD25 expression upon stimulation with ephrin-B2. This Rattus norvegicus (Rat) protein is Ephrin type-B receptor 6 (Ephb6).